The primary structure comprises 104 residues: Probable quinol monooxygenase YgiN (104 aa).

The 99-residue stretch at 2–100 folds into the ABM domain; that stretch reads LTVIAEIRTR…DVLEMNIRIL (99 aa).

Homodimer.

The catalysed reaction is menadiol + 2 O2 = menadione + 2 superoxide + 2 H(+). Can oxidize menadiol to menadione. The protein is Probable quinol monooxygenase YgiN (ygiN) of Escherichia coli O157:H7.